A 159-amino-acid polypeptide reads, in one-letter code: Regulatory protein RecX (159 aa).

It belongs to the RecX family.

It is found in the cytoplasm. Its function is as follows. Modulates RecA activity. The polypeptide is Regulatory protein RecX (Chlorobium limicola (strain DSM 245 / NBRC 103803 / 6330)).